We begin with the raw amino-acid sequence, 171 residues long: Cation channel sperm-associated auxiliary subunit TMEM249 (171 aa).

Over Met-1–Leu-2 the chain is Cytoplasmic. The helical transmembrane segment at Phe-3–Glu-17 threads the bilayer. Residues Val-18–Ala-28 lie on the Extracellular side of the membrane. Residues Tyr-29 to Ser-40 form a helical membrane-spanning segment. The Cytoplasmic portion of the chain corresponds to Ser-41–Val-171.

In terms of assembly, component of the CatSper complex or CatSpermasome composed of the core pore-forming members CATSPER1, CATSPER2, CATSPER3 and CATSPER4 as well as auxiliary members CATSPERB, CATSPERG2, CATSPERD, CATSPERE, CATSPERZ, C2CD6/CATSPERT, SLCO6C1, TMEM249, TMEM262 and EFCAB9. HSPA1 may be an additional auxiliary complex member. The core complex members CATSPER1, CATSPER2, CATSPER3 and CATSPER4 form a heterotetrameric channel. The auxiliary CATSPERB, CATSPERG2, CATSPERD and CATSPERE subunits form a pavilion-like structure over the pore which stabilizes the complex through interactions with CATSPER4, CATSPER3, CATSPER1 and CATSPER2 respectively. SLCO6C1 interacts with CATSPERE and TMEM262/CATSPERH interacts with CATSPERB, further stabilizing the complex. C2CD6/CATSPERT interacts at least with CATSPERD and is required for targeting the CatSper complex in the flagellar membrane.

Its subcellular location is the cell projection. It is found in the cilium. The protein localises to the flagellum membrane. Its function is as follows. Auxiliary component of the CatSper complex, a complex involved in sperm cell hyperactivation. The chain is Cation channel sperm-associated auxiliary subunit TMEM249 from Mus musculus (Mouse).